Consider the following 58-residue polypeptide: Large ribosomal subunit protein eL20 (58 aa).

Residues 37–58 (TTVGSQHNRKRPQIEIKEVSAA) form a disordered region. Over residues 48–58 (PQIEIKEVSAA) the composition is skewed to basic and acidic residues.

The protein belongs to the eukaryotic ribosomal protein eL20 family. In terms of assembly, part of the 50S ribosomal subunit. Binds 23S rRNA.

The sequence is that of Large ribosomal subunit protein eL20 from Halorubrum lacusprofundi (strain ATCC 49239 / DSM 5036 / JCM 8891 / ACAM 34).